A 513-amino-acid chain; its full sequence is Activin receptor type-2A (513 aa).

A signal peptide spans 1 to 19; that stretch reads MGAAAKLAFAVFLISCSSG. Residues 20 to 135 lie on the Extracellular side of the membrane; sequence AILGRSETQE…TSNPVTPKPP (116 aa). Cystine bridges form between C30/C60, C50/C78, C85/C104, C91/C103, and C105/C110. N-linked (GlcNAc...) asparagine glycans are attached at residues N43 and N66. Residues 136–161 traverse the membrane as a helical segment; the sequence is YYNILLYSLVPLMLIAGIVICAFWVY. The Cytoplasmic portion of the chain corresponds to 162–513; that stretch reads RHHKMAYPPV…VDFPPKESSL (352 aa). Positions 192–485 constitute a Protein kinase domain; the sequence is LQLLEVKARG…GERITQMQRL (294 aa). Residues 198-206 and K219 each bind ATP; that span reads KARGRFGCV. The active-site Proton acceptor is the D322.

This sequence belongs to the protein kinase superfamily. TKL Ser/Thr protein kinase family. TGFB receptor subfamily. In terms of assembly, part of a complex consisting of MAGI2/ARIP1, ACVR2A, ACVR1B and SMAD3. Interacts with MAGI2/ARIP1. Interacts with type I receptor ACVR1. Interacts with BMP7. Interacts with TSC22D1/TSC-22. Interacts with activin A/INHBA. Requires Mg(2+) as cofactor. Mn(2+) is required as a cofactor. As to expression, brain, testis, intestine, liver and kidney.

It localises to the cell membrane. It catalyses the reaction L-threonyl-[receptor-protein] + ATP = O-phospho-L-threonyl-[receptor-protein] + ADP + H(+). The catalysed reaction is L-seryl-[receptor-protein] + ATP = O-phospho-L-seryl-[receptor-protein] + ADP + H(+). Functionally, on ligand binding, forms a receptor complex consisting of two type II and two type I transmembrane serine/threonine kinases. Type II receptors phosphorylate and activate type I receptors which autophosphorylate, then bind and activate SMAD transcriptional regulators. Receptor for activin A, activin B and inhibin A. Mediates induction of adipogenesis by GDF6. The polypeptide is Activin receptor type-2A (Mus musculus (Mouse)).